A 499-amino-acid chain; its full sequence is Glycerol kinase (499 aa).

T12 lines the ADP pocket. The ATP site is built by T12, T13, and S14. T12 is a binding site for sn-glycerol 3-phosphate. R16 lines the ADP pocket. Sn-glycerol 3-phosphate is bound by residues R82, E83, Y134, and D243. Residues R82, E83, Y134, D243, and Q244 each coordinate glycerol. 2 residues coordinate ADP: T265 and G308. Residues T265, G308, Q312, and G409 each contribute to the ATP site. G409 and N413 together coordinate ADP.

Belongs to the FGGY kinase family. Homotetramer and homodimer (in equilibrium).

The enzyme catalyses glycerol + ATP = sn-glycerol 3-phosphate + ADP + H(+). The protein operates within polyol metabolism; glycerol degradation via glycerol kinase pathway; sn-glycerol 3-phosphate from glycerol: step 1/1. Its activity is regulated as follows. Activated by phosphorylation and inhibited by fructose 1,6-bisphosphate (FBP). Key enzyme in the regulation of glycerol uptake and metabolism. Catalyzes the phosphorylation of glycerol to yield sn-glycerol 3-phosphate. This Lachnoclostridium phytofermentans (strain ATCC 700394 / DSM 18823 / ISDg) (Clostridium phytofermentans) protein is Glycerol kinase.